A 397-amino-acid polypeptide reads, in one-letter code: Phosphoglycerate kinase (397 aa).

Substrate contacts are provided by residues 21 to 23 (DFN), arginine 37, 60 to 63 (HLGR), arginine 119, and arginine 152. ATP is bound by residues lysine 203, glycine 294, glutamate 325, and 354 to 357 (GGDS).

Belongs to the phosphoglycerate kinase family. Monomer.

It localises to the cytoplasm. The catalysed reaction is (2R)-3-phosphoglycerate + ATP = (2R)-3-phospho-glyceroyl phosphate + ADP. The protein operates within carbohydrate degradation; glycolysis; pyruvate from D-glyceraldehyde 3-phosphate: step 2/5. This chain is Phosphoglycerate kinase, found in Prosthecochloris aestuarii (strain DSM 271 / SK 413).